Here is a 103-residue protein sequence, read N- to C-terminus: NADH dehydrogenase [ubiquinone] 1 beta subcomplex subunit 7 (103 aa).

Residues 27–69 (RDMCAHLLIPLNKCRQAEFYLPWKCEDERHVYEKCEYELVMER) enclose the CHCH domain. 2 consecutive short sequence motifs (cx9C motif) follow at residues 30–40 (CAHLLIPLNKC) and 51–61 (CEDERHVYEKC). Disulfide bonds link cysteine 30–cysteine 61 and cysteine 40–cysteine 51.

This sequence belongs to the complex I NDUFB7 subunit family. As to quaternary structure, complex I is composed of at least 49 different subunits.

It is found in the mitochondrion. It localises to the mitochondrion inner membrane. The protein resides in the mitochondrion intermembrane space. Its function is as follows. Accessory subunit of the mitochondrial membrane respiratory chain NADH dehydrogenase (Complex I), that is believed not to be involved in catalysis. Complex I functions in the transfer of electrons from NADH to the respiratory chain. The immediate electron acceptor for the enzyme is believed to be ubiquinone. In Arabidopsis thaliana (Mouse-ear cress), this protein is NADH dehydrogenase [ubiquinone] 1 beta subcomplex subunit 7.